Reading from the N-terminus, the 134-residue chain is Profilin-1 (134 aa).

C13 and C118 are joined by a disulfide. Residues 84–100 carry the Involved in PIP2 interaction motif; the sequence is AVIRGKKGSGGITIKKT. T114 carries the phosphothreonine modification.

It belongs to the profilin family. Occurs in many kinds of cells as a complex with monomeric actin in a 1:1 ratio. In terms of processing, phosphorylated by MAP kinases.

The protein localises to the cytoplasm. It localises to the cytoskeleton. Its function is as follows. Binds to actin and affects the structure of the cytoskeleton. At high concentrations, profilin prevents the polymerization of actin, whereas it enhances it at low concentrations. The protein is Profilin-1 of Olea europaea (Common olive).